The primary structure comprises 242 residues: uncharacterized protein (242 aa).

An N-terminal signal peptide occupies residues Met-1 to Ala-20.

This sequence belongs to the periplasmic pilus chaperone family.

It localises to the periplasm. Could be required for the biogenesis of the putative YbgD fimbria. This is an uncharacterized protein from Escherichia coli (strain K12).